A 160-amino-acid chain; its full sequence is Major strawberry allergen Fra a 1-D (160 aa).

This sequence belongs to the BetVI family. Monomer.

This Fragaria ananassa (Strawberry) protein is Major strawberry allergen Fra a 1-D.